The chain runs to 194 residues: Probable GTP-binding protein EngB (194 aa).

Positions 22-194 (PLPEVALAGR…AWKAILHAIS (173 aa)) constitute an EngB-type G domain. Residues 30–37 (GRSNVGKS), 57–61 (GKTQT), 75–78 (DVPG), 142–145 (TKCD), and 174–176 (FSS) contribute to the GTP site. Mg(2+)-binding residues include Ser-37 and Thr-59.

This sequence belongs to the TRAFAC class TrmE-Era-EngA-EngB-Septin-like GTPase superfamily. EngB GTPase family. The cofactor is Mg(2+).

Necessary for normal cell division and for the maintenance of normal septation. The polypeptide is Probable GTP-binding protein EngB (Halalkalibacterium halodurans (strain ATCC BAA-125 / DSM 18197 / FERM 7344 / JCM 9153 / C-125) (Bacillus halodurans)).